The following is a 206-amino-acid chain: Isochorismatase family protein 1B (206 aa).

It belongs to the isochorismatase family.

This chain is Isochorismatase family protein 1B, found in Dictyostelium discoideum (Social amoeba).